We begin with the raw amino-acid sequence, 215 residues long: UPF0502 protein YceH (215 aa).

This sequence belongs to the UPF0502 family.

The chain is UPF0502 protein YceH from Salmonella paratyphi A (strain ATCC 9150 / SARB42).